The sequence spans 151 residues: Ubiquitin-conjugating enzyme E2 W (151 aa).

Methionine 1 is covalently cross-linked (Peptide (Met-Gly) (interchain with G-Cter in ubiquitin)). One can recognise a UBC core domain in the interval 3 to 151; that stretch reads SMQKRLQKEL…TKWWYHDDTC (149 aa). Cysteine 91 serves as the catalytic Glycyl thioester intermediate.

The protein belongs to the ubiquitin-conjugating enzyme family. In terms of assembly, homodimer. Interacts with FANCL. Interacts with STUB1/CHIP. Post-translationally, autoubiquitinated at Met-1.

It is found in the nucleus. It carries out the reaction S-ubiquitinyl-[E1 ubiquitin-activating enzyme]-L-cysteine + [E2 ubiquitin-conjugating enzyme]-L-cysteine = [E1 ubiquitin-activating enzyme]-L-cysteine + S-ubiquitinyl-[E2 ubiquitin-conjugating enzyme]-L-cysteine.. The catalysed reaction is S-ubiquitinyl-[E1 ubiquitin-activating enzyme]-L-cysteine + [acceptor protein]-N-terminal-amino acid = [E1 ubiquitin-activating enzyme]-L-cysteine + N-terminal-ubiquitinyl-[acceptor protein].. It participates in protein modification; protein ubiquitination. Functionally, accepts ubiquitin from the E1 complex and catalyzes its covalent attachment to other proteins. Specifically monoubiquitinates the N-terminus of various substrates, including ATXN3, MAPT/TAU, POLR2H/RPB8 and STUB1/CHIP, by recognizing backbone atoms of disordered N-termini. Involved in degradation of misfolded chaperone substrates by mediating monoubiquitination of STUB1/CHIP, leading to recruitment of ATXN3 to monoubiquitinated STUB1/CHIP, and restriction of the length of ubiquitin chain attached to STUB1/CHIP substrates by ATXN3. After UV irradiation, but not after mitomycin-C (MMC) treatment, acts as a specific E2 ubiquitin-conjugating enzyme for the Fanconi anemia complex by associating with E3 ubiquitin-protein ligase FANCL and catalyzing monoubiquitination of FANCD2, a key step in the DNA damage pathway. In vitro catalyzes 'Lys-11'-linked polyubiquitination. UBE2W-catalyzed ubiquitination also occurs in the presence of inactive RING/U-box type E3s, i.e. lacking the active site cysteine residues to form thioester bonds with ubiquitin, or even in the absence of E3, albeit at a slower rate. In Mus musculus (Mouse), this protein is Ubiquitin-conjugating enzyme E2 W (Ube2w).